The sequence spans 588 residues: Calicin (588 aa).

The BTB domain maps to 28 to 98 (WDIALTVDHH…FYSGKVVISE (71 aa)). The residue at position 149 (serine 149) is a Phosphoserine. 6 Kelch repeats span residues 280–327 (SVVI…SAGR), 328–375 (YIYI…TCGG), 377–423 (VYSV…TRGD), 425–475 (NLYI…SFHQ), 476–525 (DNIL…VGDN), and 526–580 (KVFV…LAKL).

Interacts with CYLC1; the interaction may be relevant for proper acrosome attachment to the nuclear envelope. As to expression, expressed in testis and in spermatozoa (at protein level).

The protein resides in the cytoplasm. It localises to the cytoskeleton. It is found in the perinuclear theca. Its subcellular location is the calyx. In terms of biological role, required for both nuclear and acrosomal shaping during spermiogenesis. This Bos taurus (Bovine) protein is Calicin (CCIN).